A 683-amino-acid polypeptide reads, in one-letter code: Dynein, 78 kDa intermediate chain, flagellar outer arm (683 aa).

Positions Met1–Ala42 are disordered. WD repeat units follow at residues His358 to Ile398, Lys407 to Glu450, Asp562 to Leu602, and Val608 to Ser647.

It belongs to the dynein intermediate chain family. As to quaternary structure, consists of at least 3 heavy chains (alpha, beta and gamma), 2 intermediate chains and 8 light chains.

The protein localises to the cytoplasm. The protein resides in the cytoskeleton. Its subcellular location is the flagellum axoneme. In terms of biological role, is essential for arm assembly or attachment to the outer doublet microtubule. The protein is Dynein, 78 kDa intermediate chain, flagellar outer arm (ODA9) of Chlamydomonas reinhardtii (Chlamydomonas smithii).